We begin with the raw amino-acid sequence, 342 residues long: uncharacterized protein (342 aa).

The next 3 membrane-spanning stretches (helical) occupy residues 35-55 (YFRVSLVLLTLLIISLVWCFS), 134-154 (LLFLPSSVLSLSLIFSLIIYF), and 161-180 (LFITRCNSTLYLFNIYYCFS). Disordered stretches follow at residues 198-220 (SSDNYSNYQQQPQQQPQQQQQYN) and 311-342 (IINNNNNNNNNNNINNSAYSNFNNSNGYNYTN).

It localises to the membrane. This is an uncharacterized protein from Dictyostelium discoideum (Social amoeba).